A 754-amino-acid polypeptide reads, in one-letter code: 5-methyltetrahydropteroyltriglutamate--homocysteine methyltransferase (754 aa).

5-methyltetrahydropteroyltri-L-glutamate contacts are provided by residues 17-20 (RELK) and K117. L-homocysteine contacts are provided by residues 431–433 (IGS) and E484. L-methionine-binding positions include 431–433 (IGS) and E484. 5-methyltetrahydropteroyltri-L-glutamate is bound by residues 515–516 (RC) and W561. D599 is an L-homocysteine binding site. Residue D599 coordinates L-methionine. 5-methyltetrahydropteroyltri-L-glutamate is bound at residue E605. Zn(2+) contacts are provided by H641, C643, and E665. The active-site Proton donor is H694. Zn(2+) is bound at residue C726.

Belongs to the vitamin-B12 independent methionine synthase family. It depends on Zn(2+) as a cofactor.

The catalysed reaction is 5-methyltetrahydropteroyltri-L-glutamate + L-homocysteine = tetrahydropteroyltri-L-glutamate + L-methionine. Its pathway is amino-acid biosynthesis; L-methionine biosynthesis via de novo pathway; L-methionine from L-homocysteine (MetE route): step 1/1. Its function is as follows. Catalyzes the transfer of a methyl group from 5-methyltetrahydrofolate to homocysteine resulting in methionine formation. The chain is 5-methyltetrahydropteroyltriglutamate--homocysteine methyltransferase from Salmonella typhi.